A 1340-amino-acid chain; its full sequence is Pleckstrin homology domain-containing family G member 2 (1340 aa).

A compositionally biased stretch (polar residues) spans 34 to 44; that stretch reads TPTAQAATTMA. A disordered region spans residues 34 to 76; it reads TPTAQAATTMASPRGSGSSTSLSTVGSEGDPSPACSASRPEPL. Over residues 45-62 the composition is skewed to low complexity; it reads SPRGSGSSTSLSTVGSEG. One can recognise a DH domain in the interval 98–279; that stretch reads RLERVAREIV…TAVAWYINDM (182 aa). In terms of domain architecture, PH spans 309 to 407; sequence ELVLEGTFRG…WIHCLQRLFF (99 aa). Disordered stretches follow at residues 431 to 623, 684 to 743, 820 to 855, 907 to 979, 991 to 1028, 1047 to 1069, and 1125 to 1146; these read PKSK…IPCI, LPGP…SVQG, MQRA…EAEP, NVSD…PSAG, TTSL…EQRD, PVCT…STDF, and PLSS…SLTD. Thr-441 carries the phosphothreonine modification. Phosphoserine occurs at positions 446 and 465. Basic and acidic residues predominate over residues 560-572; the sequence is DIPKFPRDSRVPV. The segment covering 588–600 has biased composition (acidic residues); it reads SEEEEEEDLETDE. 5 stretches are compositionally biased toward polar residues: residues 703–714, 820–831, 907–921, 930–945, and 956–972; these read SGSNPGRLSESP, MQRAETRASTNA, NVSD…SSNS, GQSN…TSLL, and PTAS…SQVP. Over residues 1049-1059 the composition is skewed to polar residues; it reads CTSSPDQQIPA. Thr-1215 carries the phosphothreonine modification. Phosphoserine is present on residues Ser-1219 and Ser-1269. Residues 1250-1340 are disordered; the sequence is RRQGPGGEGT…VGPSQGPGGS (91 aa). Pro residues predominate over residues 1276-1288; that stretch reads PSPPPQPQPPAPP. A compositionally biased stretch (low complexity) spans 1319–1333; the sequence is HPALLAAPHPGAVGP.

In terms of tissue distribution, expressed in thymus, skeletal muscle, lung, testis, uterus, pancreas and heart and also expressed during embryogenesis.

Its function is as follows. May be a transforming oncogene with exchange activity for CDC42. May be a guanine-nucleotide exchange factor (GEF) for RAC1 and CDC42. Activated by the binding to subunits beta and gamma of the heterotrimeric guanine nucleotide-binding protein (G protein). Involved in the regulation of actin polymerization. This Mus musculus (Mouse) protein is Pleckstrin homology domain-containing family G member 2 (Plekhg2).